The sequence spans 116 residues: Large ribosomal subunit protein bL17 (116 aa).

The protein belongs to the bacterial ribosomal protein bL17 family. Part of the 50S ribosomal subunit. Contacts protein L32.

This Prochlorococcus marinus (strain MIT 9215) protein is Large ribosomal subunit protein bL17.